A 199-amino-acid chain; its full sequence is NADH-quinone oxidoreductase subunit B 2 (199 aa).

[4Fe-4S] cluster-binding residues include Cys-78, Cys-79, Cys-143, and Cys-173.

The protein belongs to the complex I 20 kDa subunit family. As to quaternary structure, NDH-1 is composed of 14 different subunits. Subunits NuoB, C, D, E, F, and G constitute the peripheral sector of the complex. The cofactor is [4Fe-4S] cluster.

It is found in the cell inner membrane. The enzyme catalyses a quinone + NADH + 5 H(+)(in) = a quinol + NAD(+) + 4 H(+)(out). In terms of biological role, NDH-1 shuttles electrons from NADH, via FMN and iron-sulfur (Fe-S) centers, to quinones in the respiratory chain. The immediate electron acceptor for the enzyme in this species is believed to be ubiquinone. Couples the redox reaction to proton translocation (for every two electrons transferred, four hydrogen ions are translocated across the cytoplasmic membrane), and thus conserves the redox energy in a proton gradient. The sequence is that of NADH-quinone oxidoreductase subunit B 2 from Rhodopseudomonas palustris (strain BisB5).